Here is a 422-residue protein sequence, read N- to C-terminus: Elongation factor 1-alpha (422 aa).

One can recognise a tr-type G domain in the interval 5–221 (KPHQNLAVIG…NDLPEPQPPT (217 aa)). A G1 region spans residues 14–21 (GHVDHGKS). Position 14-21 (14-21 (GHVDHGKS)) interacts with GTP. Ser21 is a binding site for Mg(2+). Positions 70-74 (GVTID) are G2. Residues 91-94 (DCPG) form a G3 region. Residues 91–95 (DCPGH) and 146–149 (NKMD) each bind GTP. The G4 stretch occupies residues 146 to 149 (NKMD). Residues 185–187 (SAF) form a G5 region.

The protein belongs to the TRAFAC class translation factor GTPase superfamily. Classic translation factor GTPase family. EF-Tu/EF-1A subfamily.

It is found in the cytoplasm. The catalysed reaction is GTP + H2O = GDP + phosphate + H(+). In terms of biological role, GTP hydrolase that promotes the GTP-dependent binding of aminoacyl-tRNA to the A-site of ribosomes during protein biosynthesis. This Natronomonas pharaonis (strain ATCC 35678 / DSM 2160 / CIP 103997 / JCM 8858 / NBRC 14720 / NCIMB 2260 / Gabara) (Halobacterium pharaonis) protein is Elongation factor 1-alpha.